Here is a 201-residue protein sequence, read N- to C-terminus: Glycerol-3-phosphate acyltransferase (201 aa).

The next 5 membrane-spanning stretches (helical) occupy residues Met10–Leu30, Leu60–Ala80, Ala86–Phe106, Leu116–Val136, and Ala166–Ile186.

It belongs to the PlsY family. Probably interacts with PlsX.

The protein localises to the cell inner membrane. The enzyme catalyses an acyl phosphate + sn-glycerol 3-phosphate = a 1-acyl-sn-glycero-3-phosphate + phosphate. It participates in lipid metabolism; phospholipid metabolism. In terms of biological role, catalyzes the transfer of an acyl group from acyl-phosphate (acyl-PO(4)) to glycerol-3-phosphate (G3P) to form lysophosphatidic acid (LPA). This enzyme utilizes acyl-phosphate as fatty acyl donor, but not acyl-CoA or acyl-ACP. This chain is Glycerol-3-phosphate acyltransferase, found in Brucella melitensis biotype 2 (strain ATCC 23457).